We begin with the raw amino-acid sequence, 416 residues long: D-amino acid dehydrogenase (416 aa).

An FAD-binding site is contributed by 3 to 17 (ITILGSGVIGVTTAY).

The protein belongs to the DadA oxidoreductase family. FAD is required as a cofactor.

It carries out the reaction a D-alpha-amino acid + A + H2O = a 2-oxocarboxylate + AH2 + NH4(+). In terms of biological role, oxidative deamination of D-amino acids. In Brucella suis biovar 1 (strain 1330), this protein is D-amino acid dehydrogenase.